We begin with the raw amino-acid sequence, 433 residues long: Trigger factor (433 aa).

One can recognise a PPIase FKBP-type domain in the interval 161 to 246 (DSRVTIDFIG…LHKVEAQELP (86 aa)).

This sequence belongs to the FKBP-type PPIase family. Tig subfamily.

The protein localises to the cytoplasm. The enzyme catalyses [protein]-peptidylproline (omega=180) = [protein]-peptidylproline (omega=0). Involved in protein export. Acts as a chaperone by maintaining the newly synthesized protein in an open conformation. Functions as a peptidyl-prolyl cis-trans isomerase. The chain is Trigger factor from Photobacterium profundum (strain SS9).